The chain runs to 161 residues: 18.1 kDa class I heat shock protein (161 aa).

Positions 47–161 constitute a sHSP domain; the sequence is ETAAFAGARI…PDVKSIQVTG (115 aa).

The protein belongs to the small heat shock protein (HSP20) family. In terms of assembly, may form oligomeric structures.

The protein localises to the cytoplasm. The protein is 18.1 kDa class I heat shock protein (HSP18.1) of Oryza sativa subsp. japonica (Rice).